The primary structure comprises 149 residues: Low molecular weight protein-tyrosine-phosphatase Wzb (149 aa).

C9 serves as the catalytic Nucleophile. Residue R15 is part of the active site. The Proton donor role is filled by D115.

It belongs to the low molecular weight phosphotyrosine protein phosphatase family.

It catalyses the reaction O-phospho-L-tyrosyl-[protein] + H2O = L-tyrosyl-[protein] + phosphate. It functions in the pathway glycan metabolism; exopolysaccharide biosynthesis. In terms of biological role, dephosphorylates Wzc. Required for the extracellular polysaccharide colanic acid synthesis. Probably involved in the export of colanic acid from the cell to medium. Involved in protection of cells against contact-dependent growth inhibition (CDI). This chain is Low molecular weight protein-tyrosine-phosphatase Wzb (wzb), found in Salmonella typhi.